The following is a 269-amino-acid chain: tRNA-cytidine(32) 2-sulfurtransferase (269 aa).

Positions 53–58 (SGGKDS) match the PP-loop motif motif. [4Fe-4S] cluster contacts are provided by Cys128, Cys131, and Cys218.

Belongs to the TtcA family. As to quaternary structure, homodimer. Requires Mg(2+) as cofactor. It depends on [4Fe-4S] cluster as a cofactor.

The protein localises to the cytoplasm. It carries out the reaction cytidine(32) in tRNA + S-sulfanyl-L-cysteinyl-[cysteine desulfurase] + AH2 + ATP = 2-thiocytidine(32) in tRNA + L-cysteinyl-[cysteine desulfurase] + A + AMP + diphosphate + H(+). Its pathway is tRNA modification. Its function is as follows. Catalyzes the ATP-dependent 2-thiolation of cytidine in position 32 of tRNA, to form 2-thiocytidine (s(2)C32). The sulfur atoms are provided by the cysteine/cysteine desulfurase (IscS) system. This chain is tRNA-cytidine(32) 2-sulfurtransferase, found in Pelobacter propionicus (strain DSM 2379 / NBRC 103807 / OttBd1).